Here is a 928-residue protein sequence, read N- to C-terminus: Retinoblastoma-associated protein (928 aa).

Residues methionine 1 to leucine 42 form a disordered region. Proline 2 bears the N,N-dimethylproline mark. A compositionally biased stretch (low complexity) spans lysine 8 to glutamate 19. Residues proline 29–proline 39 are compositionally biased toward acidic residues. Serine 37 is modified (phosphoserine). Serine 249 is subject to Phosphoserine; by CDK1. Threonine 252 carries the phosphothreonine; by CDK1 modification. Threonine 356 carries the post-translational modification Phosphothreonine. A Phosphothreonine; by CDK1 modification is found at threonine 373. The domain A stretch occupies residues threonine 373–arginine 579. A pocket; binds T and E1A region spans residues threonine 373–tyrosine 771. Residue serine 567 is modified to Phosphoserine; by CDK2. The interval glutamate 580–glutamine 639 is spacer. At serine 608 the chain carries Phosphoserine. Residues valine 610 to alanine 632 are disordered. Position 612 is a phosphoserine; by CHEK2 and CHEK1 (serine 612). A compositionally biased stretch (polar residues) spans threonine 619–alanine 632. Serine 624 carries the phosphoserine modification. Positions lysine 640–tyrosine 771 are domain B. Residues arginine 763–lysine 928 form an interaction with LIMD1 region. The interval tyrosine 771 to lysine 928 is domain C; mediates interaction with E4F1. Residues serine 780, serine 788, and serine 795 each carry the phosphoserine modification. Serine 807 carries the phosphoserine; by CDK1 and CDK3 modification. Lysine 810 is modified (N6-methyllysine; by SMYD2). The residue at position 811 (serine 811) is a Phosphoserine; by CDK1 and CDK3. Residue threonine 821 is modified to Phosphothreonine; by CDK6. Threonine 823 carries the phosphothreonine modification. Residue threonine 826 is modified to Phosphothreonine; by CDK4. Threonine 841 carries the post-translational modification Phosphothreonine. Serine 855 is subject to Phosphoserine. Lysine 860 bears the N6-methyllysine; by SMYD2 mark. The Bipartite nuclear localization signal motif lies at lysine 860–arginine 876. The segment at lysine 860–lysine 928 is disordered. Lysine 873 and lysine 874 each carry N6-acetyllysine; by PCAF. Residues lysine 915 to lysine 928 are compositionally biased toward basic and acidic residues.

This sequence belongs to the retinoblastoma protein (RB) family. The hypophosphorylated form interacts with and sequesters the E2F1 transcription factor, thereby inhibiting E2F1 transcription. Interacts with heterodimeric E2F/DP transcription factor complexes containing TFDP1 and either E2F1, E2F3, E2F4 or E2F5, or TFDP2 and E2F4. Interacts (when hyperphosphorylated and hypophosphorylated) with PKP3; the interaction inhibits RB1 interaction with and repression of the transcription factor E2F1, potentially via sequestering RB1 to the cytoplasm. The unphosphorylated form interacts with EID1, ARID3B, KDM5A, SUV39H1, MJD2A/JHDM3A and THOC1. Interacts with the N-terminal domain of TAF1. Interacts with SNW1, ATAD5, AATF, DNMT1, LIN9, LMNA, KMT5B, KMT5C, PELP1, UHRF2 and TMPO-alpha. Interacts with GRIP1 and UBR4. Interacts with ARID4A and KDM5B. Interacts with E4F1 and LIMD1. Interacts with SMARCA4/BRG1 and HDAC1. Interacts with PSMA3 and USP4. Interacts (when methylated at Lys-860) with L3MBTL1. Interacts with CHEK2; phosphorylates RB1. Interacts with CDK1 and CDK2. Interacts with PRMT2. Interacts with CEBPA. P-TEFB complex interacts with RB1; promotes phosphorylation of RB1. Interacts with RBBP9; the interaction disrupts RB1 binding to E2F1. Interacts with KAT2B/PCAF and EP300/P300. Interacts with PAX5. Interacts (phosphorylated and unphosphorylated) with BLCAP. May interact with NDC80. As to quaternary structure, (Microbial infection) Interacts with adenovirus E1A protein. In terms of assembly, (Microbial infection) Interacts with HPV E7 protein. (Microbial infection) Interacts with SV40 large T antigen. As to quaternary structure, (Microbial infection) Interacts with human cytomegalovirus/HHV-5 proteins UL82 and UL123. In terms of assembly, (Microbial infection) Interacts with molluscum contagiosum virus protein MC007. Post-translationally, phosphorylated by CDK6 and CDK4, and subsequently by CDK2 at Ser-567 in G1, thereby releasing E2F1 which is then able to activate cell growth. Dephosphorylated at the late M phase. SV40 large T antigen, HPV E7 and adenovirus E1A bind to the underphosphorylated, active form of pRb. Phosphorylation at Thr-821 and Thr-826 promotes interaction between the C-terminal domain C and the Pocket domain, and thereby inhibits interactions with heterodimeric E2F/DP transcription factor complexes. Dephosphorylated at Ser-795 by calcineruin upon calcium stimulation. CDK3/cyclin-C-mediated phosphorylation at Ser-807 and Ser-811 is required for G0-G1 transition. Phosphorylated by CDK1 and CDK2 upon TGFB1-mediated apoptosis. N-terminus is methylated by METTL11A/NTM1. Monomethylation at Lys-810 by SMYD2 enhances phosphorylation at Ser-807 and Ser-811, and promotes cell cycle progression. Monomethylation at Lys-860 by SMYD2 promotes interaction with L3MBTL1. In terms of processing, acetylated during keratinocyte differentiation. Acetylation at Lys-873 and Lys-874 regulates subcellular localization. Can be deacetylated by SIRT1. As to expression, expressed in the retina. Expressed in foreskin keratinocytes (at protein level).

It is found in the nucleus. The protein resides in the cytoplasm. In terms of biological role, tumor suppressor that is a key regulator of the G1/S transition of the cell cycle. The hypophosphorylated form binds transcription regulators of the E2F family, preventing transcription of E2F-responsive genes. Both physically blocks E2Fs transactivating domain and recruits chromatin-modifying enzymes that actively repress transcription. Cyclin and CDK-dependent phosphorylation of RB1 induces its dissociation from E2Fs, thereby activating transcription of E2F responsive genes and triggering entry into S phase. RB1 also promotes the G0-G1 transition upon phosphorylation and activation by CDK3/cyclin-C. Directly involved in heterochromatin formation by maintaining overall chromatin structure and, in particular, that of constitutive heterochromatin by stabilizing histone methylation. Recruits and targets histone methyltransferases SUV39H1, KMT5B and KMT5C, leading to epigenetic transcriptional repression. Controls histone H4 'Lys-20' trimethylation. Inhibits the intrinsic kinase activity of TAF1. Mediates transcriptional repression by SMARCA4/BRG1 by recruiting a histone deacetylase (HDAC) complex to the c-FOS promoter. In resting neurons, transcription of the c-FOS promoter is inhibited by BRG1-dependent recruitment of a phospho-RB1-HDAC1 repressor complex. Upon calcium influx, RB1 is dephosphorylated by calcineurin, which leads to release of the repressor complex. Its function is as follows. (Microbial infection) In case of viral infections, interactions with SV40 large T antigen, HPV E7 protein or adenovirus E1A protein induce the disassembly of RB1-E2F1 complex thereby disrupting RB1's activity. In Homo sapiens (Human), this protein is Retinoblastoma-associated protein (RB1).